The sequence spans 176 residues: Variant surface antigen A (176 aa).

The signal sequence occupies residues 1 to 29 (MKKSIFSKKLLVSFGSLVALAAIPLIAIS). A lipid anchor (N-palmitoyl cysteine) is attached at Cys-30. The S-diacylglycerol cysteine moiety is linked to residue Cys-30. Residues 33-176 (TDNNSSQSQQ…TKTENTQHTS (144 aa)) are disordered. The segment covering 35–121 (NNSSQSQQPG…GSNSESGMNS (87 aa)) has biased composition (low complexity). Repeat unit 1 spans residues 123 to 135 (KTENTQQSEAPGT). A 2.5 X 13 AA repeats region spans residues 123–176 (KTENTQQSEAPGTNTGNKTTSESNSESGMNSEKTENTQQSEAPGTKTENTQHTS). Residues 126-142 (NTQQSEAPGTNTGNKTT) are compositionally biased toward polar residues. Over residues 143-153 (SESNSESGMNS) the composition is skewed to low complexity. Residues 155 to 167 (KTENTQQSEAPGT) form repeat 2. Residues 158–176 (NTQQSEAPGTKTENTQHTS) are compositionally biased toward polar residues. Residues 168–176 (KTENTQHTS) form a 3; truncated repeat.

It localises to the cell membrane. Its function is as follows. Responsible for the antigenic diversity for host adaptation. In Mesomycoplasma hyorhinis (Mycoplasma hyorhinis), this protein is Variant surface antigen A (vlpA).